Here is a 237-residue protein sequence, read N- to C-terminus: Flagellar L-ring protein (237 aa).

Positions 1–16 (MIKRSAVVLMAVILTG) are cleaved as a signal peptide. Residue Cys-17 is the site of N-palmitoyl cysteine attachment. Cys-17 carries S-diacylglycerol cysteine lipidation. The interval 122-143 (PPDSSGDMSTDSNSSSDGKGSV) is disordered. The segment covering 124-140 (DSSGDMSTDSNSSSDGK) has biased composition (low complexity).

The protein belongs to the FlgH family. As to quaternary structure, the basal body constitutes a major portion of the flagellar organelle and consists of four rings (L,P,S, and M) mounted on a central rod.

It is found in the cell outer membrane. Its subcellular location is the bacterial flagellum basal body. Assembles around the rod to form the L-ring and probably protects the motor/basal body from shearing forces during rotation. This Allorhizobium ampelinum (strain ATCC BAA-846 / DSM 112012 / S4) (Agrobacterium vitis (strain S4)) protein is Flagellar L-ring protein.